Reading from the N-terminus, the 370-residue chain is Cytochrome b (370 aa).

The next 4 membrane-spanning stretches (helical) occupy residues Phe25–Val45, Trp69–Ile90, Trp105–Leu125, and Phe170–Leu190. Residues His75 and His89 each coordinate heme b. The heme b site is built by His174 and His188. An a ubiquinone-binding site is contributed by His193. The next 4 membrane-spanning stretches (helical) occupy residues Tyr218–Phe238, Leu280–His300, Leu312–Thr332, and Phe339–Pro358.

The protein belongs to the cytochrome b family. As to quaternary structure, the cytochrome bc1 complex contains 3 respiratory subunits (MT-CYB, CYC1 and UQCRFS1), 2 core proteins (UQCRC1 and UQCRC2) and probably 6 low-molecular weight proteins. It depends on heme b as a cofactor.

Its subcellular location is the mitochondrion inner membrane. Functionally, component of the ubiquinol-cytochrome c reductase complex (complex III or cytochrome b-c1 complex) that is part of the mitochondrial respiratory chain. The b-c1 complex mediates electron transfer from ubiquinol to cytochrome c. Contributes to the generation of a proton gradient across the mitochondrial membrane that is then used for ATP synthesis. The sequence is that of Cytochrome b (MT-CYB) from Chilabothrus strigilatus strigilatus (New Providence boa constrictor).